The primary structure comprises 184 residues: UPF0398 protein BC_1561 (184 aa).

The protein belongs to the UPF0398 family.

The protein is UPF0398 protein BC_1561 of Bacillus cereus (strain ATCC 14579 / DSM 31 / CCUG 7414 / JCM 2152 / NBRC 15305 / NCIMB 9373 / NCTC 2599 / NRRL B-3711).